Consider the following 369-residue polypeptide: Glycolate oxidase 1 (369 aa).

In terms of domain architecture, FMN hydroxy acid dehydrogenase spans 1-360 (MGEITNVMEY…TRKHIITESD (360 aa)). Tyr-25 contacts glyoxylate. Residues 78–80 (PTA), Ser-107, 128–130 (QLY), and Thr-156 contribute to the FMN site. Residue Tyr-130 participates in glyoxylate binding. Arg-165 contributes to the glyoxylate binding site. FMN contacts are provided by Lys-231 and Ser-253. Residues His-255 and Arg-258 each contribute to the glyoxylate site. His-255 functions as the Proton acceptor in the catalytic mechanism. Residues 286-290 (DGGVR) and 309-310 (GR) each bind FMN.

This sequence belongs to the FMN-dependent alpha-hydroxy acid dehydrogenase family. Homotetramer. FMN is required as a cofactor.

Its subcellular location is the peroxisome. It catalyses the reaction glycolate + O2 = glyoxylate + H2O2. Its pathway is photosynthesis; photorespiration; glycine from 2-phosphoglycolate: step 2/3. Catalyzes the oxidation of glycolate to glyoxylate, with a reduction of O2 to H2O2. Is an essential enzyme in photorespiration in plants. Photorespiration plays a vital role in C4 photosynthesis in Z.mays and is essential for maize seedling development and maintaining low (non-toxic) levels of glycolate. In Zea mays (Maize), this protein is Glycolate oxidase 1.